The following is a 276-amino-acid chain: Non-homologous end joining protein Ku (276 aa).

The Ku domain maps to 11–177; sequence ISFGLVHIPI…PEEIRSMEPL (167 aa). A disordered region spans residues 256 to 276; the sequence is QVKTQQKKEAAPKKERRRKTS.

The protein belongs to the prokaryotic Ku family. In terms of assembly, homodimer. Interacts with LigD.

In terms of biological role, with LigD forms a non-homologous end joining (NHEJ) DNA repair enzyme, which repairs dsDNA breaks with reduced fidelity. Binds linear dsDNA with 5'- and 3'- overhangs but not closed circular dsDNA nor ssDNA. Recruits and stimulates the ligase activity of LigD. The sequence is that of Non-homologous end joining protein Ku from Heliobacterium modesticaldum (strain ATCC 51547 / Ice1).